The following is a 357-amino-acid chain: UPF0744 protein C106.03 (357 aa).

Residue S282 is modified to Phosphoserine.

Belongs to the UPF0744 family.

The protein resides in the cytoplasm. The chain is UPF0744 protein C106.03 from Schizosaccharomyces pombe (strain 972 / ATCC 24843) (Fission yeast).